The chain runs to 156 residues: Small ribosomal subunit protein uS7 (156 aa).

It belongs to the universal ribosomal protein uS7 family. In terms of assembly, part of the 30S ribosomal subunit. Contacts proteins S9 and S11.

In terms of biological role, one of the primary rRNA binding proteins, it binds directly to 16S rRNA where it nucleates assembly of the head domain of the 30S subunit. Is located at the subunit interface close to the decoding center, probably blocks exit of the E-site tRNA. The polypeptide is Small ribosomal subunit protein uS7 (Phytoplasma mali (strain AT)).